We begin with the raw amino-acid sequence, 417 residues long: Aminoacyltransferase FemB (417 aa).

Belongs to the FemABX family.

Its subcellular location is the cytoplasm. It catalyses the reaction MurNAc-L-Ala-D-isoglutaminyl-L-Lys-(N(6)-tri-Gly)-D-Ala-D-Ala-diphospho-di-trans,octa-cis-undecaprenyl-GlcNAc + 2 glycyl-tRNA(Gly) = MurNAc-L-Ala-D-isoglutaminyl-L-Lys-(N(6)-penta-Gly)-D-Ala-D-Ala-diphospho-di-trans,octa-cis-undecaprenyl-GlcNAc + 2 tRNA(Gly) + 2 H(+). In terms of biological role, catalyzes the incorporation of amino acid(s) into the interchain peptide bridge of peptidoglycan, using aminoacyl-tRNA as amino acid donor. The protein is Aminoacyltransferase FemB (femB) of Staphylococcus epidermidis.